We begin with the raw amino-acid sequence, 365 residues long: 1-aminocyclopropane-1-carboxylate oxidase homolog 1 (365 aa).

In terms of domain architecture, Fe2OG dioxygenase spans 212 to 313 (CTNSLLLLGH…RISVACFFSS (102 aa)). Residues H238, D240, and H294 each contribute to the Fe cation site.

It belongs to the iron/ascorbate-dependent oxidoreductase family. Fe cation is required as a cofactor.

This Arabidopsis thaliana (Mouse-ear cress) protein is 1-aminocyclopropane-1-carboxylate oxidase homolog 1.